Consider the following 381-residue polypeptide: Chorismate synthase (381 aa).

NADP(+)-binding residues include Arg-41 and Arg-47. FMN-binding positions include 127-129, 247-248, Gly-291, 306-310, and Arg-332; these read RAS, QA, and KPIPT.

It belongs to the chorismate synthase family. Homotetramer. It depends on FMNH2 as a cofactor.

The catalysed reaction is 5-O-(1-carboxyvinyl)-3-phosphoshikimate = chorismate + phosphate. It participates in metabolic intermediate biosynthesis; chorismate biosynthesis; chorismate from D-erythrose 4-phosphate and phosphoenolpyruvate: step 7/7. In terms of biological role, catalyzes the anti-1,4-elimination of the C-3 phosphate and the C-6 proR hydrogen from 5-enolpyruvylshikimate-3-phosphate (EPSP) to yield chorismate, which is the branch point compound that serves as the starting substrate for the three terminal pathways of aromatic amino acid biosynthesis. This reaction introduces a second double bond into the aromatic ring system. The polypeptide is Chorismate synthase (Anaeromyxobacter dehalogenans (strain 2CP-C)).